The following is an 83-amino-acid chain: Cytochrome b559 subunit alpha (83 aa).

The helical transmembrane segment at 21 to 35 threads the bilayer; sequence VIHSITIPSLFVAGW. Heme is bound at residue His-23.

The protein belongs to the PsbE/PsbF family. Heterodimer of an alpha subunit and a beta subunit. PSII is composed of 1 copy each of membrane proteins PsbA, PsbB, PsbC, PsbD, PsbE, PsbF, PsbH, PsbI, PsbJ, PsbK, PsbL, PsbM, PsbT, PsbX, PsbY, PsbZ, Psb30/Ycf12, at least 3 peripheral proteins of the oxygen-evolving complex and a large number of cofactors. It forms dimeric complexes. It depends on heme b as a cofactor.

It is found in the plastid. It localises to the chloroplast thylakoid membrane. In terms of biological role, this b-type cytochrome is tightly associated with the reaction center of photosystem II (PSII). PSII is a light-driven water:plastoquinone oxidoreductase that uses light energy to abstract electrons from H(2)O, generating O(2) and a proton gradient subsequently used for ATP formation. It consists of a core antenna complex that captures photons, and an electron transfer chain that converts photonic excitation into a charge separation. The polypeptide is Cytochrome b559 subunit alpha (Nephroselmis olivacea (Green alga)).